Here is a 363-residue protein sequence, read N- to C-terminus: Protein disulfide-isomerase 1 (363 aa).

The N-terminal stretch at 1–20 (MKILLFVTLIALAFVALCSA) is a signal peptide. Thioredoxin domains lie at 21 to 132 (EGNV…NHAK) and 133 to 285 (TNVK…AAAE). Residues Cys51, Cys54, Cys172, and Cys175 each act as nucleophile in the active site. 2 disulfides stabilise this stretch: Cys51-Cys54 and Cys172-Cys175.

This sequence belongs to the protein disulfide isomerase family.

The protein localises to the endoplasmic reticulum lumen. It catalyses the reaction Catalyzes the rearrangement of -S-S- bonds in proteins.. Its function is as follows. Participates in the folding of proteins containing disulfide bonds, may be involved in glycosylation, prolyl hydroxylation and triglyceride transfer. The sequence is that of Protein disulfide-isomerase 1 (pdi1) from Dictyostelium discoideum (Social amoeba).